A 123-amino-acid chain; its full sequence is Homeobox protein CDX-1 (123 aa).

The homeobox DNA-binding region spans 5-64; sequence KDKYRVVYTDHQRLELEKEFHYSRYITIRRKSELAANLGLTERQVKIWFQNRRAKERKVN. An interaction with DNA region spans residues 8–29; sequence YRVVYTDHQRLELEKEFHYSRY. The interval 47–58 is interaction with 5-mCpG DNA; that stretch reads RQVKIWFQNRRA. Over residues 57–68 the composition is skewed to basic residues; that stretch reads RAKERKVNKKKQ. The tract at residues 57–123 is disordered; sequence RAKERKVNKK…PVPVKEEFLP (67 aa).

Belongs to the Caudal homeobox family. Intestinal epithelium.

It is found in the nucleus. Plays a role in transcriptional regulation. Involved in activated KRAS-mediated transcriptional activation of PRKD1 in colorectal cancer (CRC) cells. Binds to the PRKD1 promoter in colorectal cancer (CRC) cells. Could play a role in the terminal differentiation of the intestine. Binds preferentially to methylated DNA. This Rattus norvegicus (Rat) protein is Homeobox protein CDX-1 (Cdx1).